Here is a 421-residue protein sequence, read N- to C-terminus: UDP-N-acetylglucosamine 1-carboxyvinyltransferase (421 aa).

22–23 (KN) provides a ligand contact to phosphoenolpyruvate. R93 provides a ligand contact to UDP-N-acetyl-alpha-D-glucosamine. The active-site Proton donor is the C117. Position 117 is a 2-(S-cysteinyl)pyruvic acid O-phosphothioketal (C117). Residues 122 to 126 (RPVDL), D308, and V330 each bind UDP-N-acetyl-alpha-D-glucosamine.

Belongs to the EPSP synthase family. MurA subfamily.

The protein resides in the cytoplasm. It catalyses the reaction phosphoenolpyruvate + UDP-N-acetyl-alpha-D-glucosamine = UDP-N-acetyl-3-O-(1-carboxyvinyl)-alpha-D-glucosamine + phosphate. It participates in cell wall biogenesis; peptidoglycan biosynthesis. Its function is as follows. Cell wall formation. Adds enolpyruvyl to UDP-N-acetylglucosamine. The polypeptide is UDP-N-acetylglucosamine 1-carboxyvinyltransferase (Stutzerimonas stutzeri (strain A1501) (Pseudomonas stutzeri)).